The primary structure comprises 147 residues: uncharacterized protein (147 aa).

This is an uncharacterized protein from Saccharomyces cerevisiae (strain ATCC 204508 / S288c) (Baker's yeast).